We begin with the raw amino-acid sequence, 290 residues long: Programmed cell death 1 ligand 1 (290 aa).

An N-terminal signal peptide occupies residues 1–18 (MRIFAVFIFMTYWHLLNA). In terms of domain architecture, Ig-like V-type spans 19 to 127 (FTVTVPKDLY…YGGADYKRIT (109 aa)). At 19–238 (FTVTVPKDLY…LPLAHPPNER (220 aa)) the chain is on the extracellular side. An N-linked (GlcNAc...) asparagine glycan is attached at N35. Disulfide bonds link C40–C114 and C155–C209. Residues 133–225 (PYNKINQRIL…PEENHTAELV (93 aa)) enclose the Ig-like C2-type domain. N192, N200, and N219 each carry an N-linked (GlcNAc...) asparagine glycan. Residues 239-259 (THLVILGAILLCLGVALTFIF) traverse the membrane as a helical segment. The Cytoplasmic segment spans residues 260-290 (RLRKGRMMDVKKCGIQDTNSKKQSDTHLEET).

Belongs to the immunoglobulin superfamily. BTN/MOG family. In terms of assembly, interacts with PDCD1. Interacts (via transmembrane domain) with CMTM4 and CMTM6. Interacts with (phosphorylated) STAT3; promoting nuclear translocation. Interacts with CD80. May form homomultimers. Ubiquitinated; STUB1 likely mediates polyubiquitination of PD-L1/CD274 triggering its degradation. Ubiquitinated by MARCHF8; leading to degradation. Deubiquitinated by USP22; leading to stabilization. In terms of tissue distribution, highly expressed in the heart, skeletal muscle, placenta and lung. Weakly expressed in the thymus, spleen, kidney and liver. Expressed on activated T- and B-cells, dendritic cells, keratinocytes and monocytes. Widely expressed, highest in lung, liver and pituitary and in various peripheral blood cells, including neutrophils and some subtypes of lymphoid and myeloid cells.

The protein localises to the cell membrane. The protein resides in the early endosome membrane. Its subcellular location is the recycling endosome membrane. It localises to the nucleus. It is found in the endomembrane system. The protein localises to the secreted. In terms of biological role, plays a critical role in induction and maintenance of immune tolerance to self. As a ligand for the inhibitory receptor PDCD1/PD-1, modulates the activation threshold of T-cells and limits T-cell effector response. Through a yet unknown activating receptor, may costimulate T-cell subsets that predominantly produce interleukin-10 (IL10). Can also act as a transcription coactivator: in response to hypoxia, translocates into the nucleus via its interaction with phosphorylated STAT3 and promotes transcription of GSDMC, leading to pyroptosis. Its function is as follows. The PDCD1-mediated inhibitory pathway is exploited by tumors to attenuate anti-tumor immunity and escape destruction by the immune system, thereby facilitating tumor survival. The interaction with PDCD1/PD-1 inhibits cytotoxic T lymphocytes (CTLs) effector function. The blockage of the PDCD1-mediated pathway results in the reversal of the exhausted T-cell phenotype and the normalization of the anti-tumor response, providing a rationale for cancer immunotherapy. The polypeptide is Programmed cell death 1 ligand 1 (Homo sapiens (Human)).